We begin with the raw amino-acid sequence, 321 residues long: Ribose-phosphate pyrophosphokinase 1 (321 aa).

Mg(2+)-binding residues include D131, H133, D142, and D146.

This sequence belongs to the ribose-phosphate pyrophosphokinase family.

It carries out the reaction D-ribose 5-phosphate + ATP = 5-phospho-alpha-D-ribose 1-diphosphate + AMP + H(+). The sequence is that of Ribose-phosphate pyrophosphokinase 1 (PRS1) from Candida albicans (Yeast).